The chain runs to 510 residues: Ectonucleoside triphosphate diphosphohydrolase 1 (510 aa).

The Cytoplasmic portion of the chain corresponds to 1-16 (MEDIKDSKVKRFCSKN). A helical membrane pass occupies residues 17–37 (ILIILGFTSILAVIALIAVGL). Over 38–478 (TQNKPLPENV…SPPLPHSTYI (441 aa)) the chain is Extracellular. Asn-73 carries an N-linked (GlcNAc...) asparagine glycan. A disulfide bridge connects residues Cys-84 and Cys-108. Glu-174 acts as the Proton acceptor in catalysis. N-linked (GlcNAc...) asparagine glycans are attached at residues Asn-226, Asn-291, and Asn-333. 2 disulfide bridges follow: Cys-254–Cys-300 and Cys-281–Cys-324. 2 cysteine pairs are disulfide-bonded: Cys-337/Cys-342 and Cys-391/Cys-414. N-linked (GlcNAc...) asparagine glycans are attached at residues Asn-428 and Asn-457. The chain crosses the membrane as a helical span at residues 479–499 (GLMVLFSLLLVAVAITGLFIY). Residues 500-510 (SKPSYFWKEAV) are Cytoplasmic-facing.

The protein belongs to the GDA1/CD39 NTPase family. In terms of assembly, homodimer; disulfide-linked. Ca(2+) serves as cofactor. The cofactor is Mg(2+). N-glycosylated. Post-translationally, the N-terminus is blocked. In terms of processing, palmitoylated on Cys-13; which is required for caveola targeting.

The protein localises to the membrane. It localises to the caveola. It carries out the reaction a ribonucleoside 5'-triphosphate + 2 H2O = a ribonucleoside 5'-phosphate + 2 phosphate + 2 H(+). It catalyses the reaction a ribonucleoside 5'-triphosphate + H2O = a ribonucleoside 5'-diphosphate + phosphate + H(+). The enzyme catalyses a ribonucleoside 5'-diphosphate + H2O = a ribonucleoside 5'-phosphate + phosphate + H(+). The catalysed reaction is ATP + 2 H2O = AMP + 2 phosphate + 2 H(+). It carries out the reaction ATP + H2O = ADP + phosphate + H(+). It catalyses the reaction ADP + H2O = AMP + phosphate + H(+). The enzyme catalyses CTP + 2 H2O = CMP + 2 phosphate + 2 H(+). The catalysed reaction is CTP + H2O = CDP + phosphate + H(+). It carries out the reaction CDP + H2O = CMP + phosphate + H(+). It catalyses the reaction GTP + 2 H2O = GMP + 2 phosphate + 2 H(+). The enzyme catalyses GTP + H2O = GDP + phosphate + H(+). The catalysed reaction is GDP + H2O = GMP + phosphate + H(+). It carries out the reaction ITP + 2 H2O = IMP + 2 phosphate + 2 H(+). It catalyses the reaction ITP + H2O = IDP + phosphate + H(+). The enzyme catalyses IDP + H2O = IMP + phosphate + H(+). The catalysed reaction is UTP + 2 H2O = UMP + 2 phosphate + 2 H(+). It carries out the reaction UTP + H2O = UDP + phosphate + H(+). It catalyses the reaction UDP + H2O = UMP + phosphate + H(+). Catalyzes the hydrolysis of both di- and triphosphate nucleotides (NDPs and NTPs) and hydrolyze NTPs to nucleotide monophosphates (NMPs) in two distinct successive phosphate-releasing steps, with NDPs as intermediates and participates in the regulation of extracellular levels of nucleotides. By hydrolyzing proinflammatory ATP and platelet-activating ADP to AMP, it blocks platelet aggregation and supports blood flow. This Mus musculus (Mouse) protein is Ectonucleoside triphosphate diphosphohydrolase 1.